The following is a 1029-amino-acid chain: Protein SUPPRESSOR OF PHYA-105 1 (1029 aa).

Residues 42–69 (SETANSDCPGSSAHRNVDLTKPPPPEEA) form a disordered region. One can recognise a Protein kinase domain in the interval 188 to 529 (VQMKTPVSSS…ARDILKSELI (342 aa)). Residues 194-202 (VSSSNFSQL) and Lys-216 contribute to the ATP site. The interval 213-269 (VVGKNQETPPEFVSDQDLGSKEKKLDISKSPTPHDVLPLKSSPKGNGMVSHGDGNHS) is disordered. Residues 230–239 (LGSKEKKLDI) are compositionally biased toward basic and acidic residues. Residue Asp-316 is the Proton acceptor of the active site. Positions 347 to 392 (EDLNRRRPVVEESSSGGRDSKKRKMDLHLNSPGNQLQATSTGRPFK) are disordered. Residues 377–388 (SPGNQLQATSTG) are compositionally biased toward polar residues. Residues 557 to 589 (VQKKKKASKLLQDIQTLEDDIKEAERRYSSNVS) adopt a coiled-coil conformation. Residues 653 to 679 (ARSDKTLKDRDRCSENQNENQDMSTKG) are disordered. Residues 654 to 666 (RSDKTLKDRDRCS) are compositionally biased toward basic and acidic residues. The segment covering 667–679 (ENQNENQDMSTKG) has biased composition (polar residues). 7 WD repeats span residues 714-753 (NSASVVCSLSFDPDEEHIAAAGISKKIKIFDFNAFMNESV), 763-803 (VNKS…GFSQ), 806-846 (EHQK…SLGT), 848-888 (WSPA…TPWC), 892-930 (GHEKAVSYVKFMDSETIVSASTDNSLKLWNLNKTNSSGL), 932-971 (PGACSLTYKGHTNQKNFVGLSVLDGYIACGSETNEVYSYY), and 997-1029 (DNGQFVSSVCWRKKSNMLVAANSTGNMKLLKLV). The DWD box signature appears at 866-881 (LAFGSADYKVYCYDLR).

In terms of assembly, interacts with CO, COP1, HFR1, HY5 and PHYA. Light induces dissociation of the SPA1/COP1 complex. Binds to CRY1 in response to blue light, this interaction prevents SPA1/COP1 complex formation but stimulate CRY2/COP1 complex, and thus avoid COP1-dependent degradation of the transcription factor HY5 by the proteasome and promotes hypocotyl elongation.

It localises to the nucleus speckle. The protein localises to the nucleus. The protein resides in the PML body. In terms of biological role, controls normal photoperiodic flowering and regulates circadian rhythms. Required for suppression of photomorphogenesis in dark-grown seedlings and for normal elongation growth of adult plants. Integral component of the COP1/SPA E3 ubiquitin-protein ligase complex. Involved in HY5, HFR1, LAF1 and CO degradation. This chain is Protein SUPPRESSOR OF PHYA-105 1 (SPA1), found in Arabidopsis thaliana (Mouse-ear cress).